The following is a 344-amino-acid chain: Cycloartenol-C-24-methyltransferase 1 (344 aa).

Belongs to the class I-like SAM-binding methyltransferase superfamily. Erg6/SMT family.

It catalyses the reaction zymosterol + S-adenosyl-L-methionine = fecosterol + S-adenosyl-L-homocysteine + H(+). It participates in steroid biosynthesis; sterol biosynthesis. Its function is as follows. Catalyzes the methyl transfer from S-adenosyl-methionine to the C-24 of cycloartenol to form 24-methylene cycloartenol. This Oryza sativa subsp. japonica (Rice) protein is Cycloartenol-C-24-methyltransferase 1 (Smt1-1).